The chain runs to 224 residues: Proteasome subunit beta (224 aa).

Residues 1–6 (MDVMKG) constitute a propeptide, removed in mature form; by autocatalysis. Thr-7 (nucleophile) is an active-site residue.

It belongs to the peptidase T1B family. The 20S proteasome core is composed of 14 alpha and 14 beta subunits that assemble into four stacked heptameric rings, resulting in a barrel-shaped structure. The two inner rings, each composed of seven catalytic beta subunits, are sandwiched by two outer rings, each composed of seven alpha subunits. The catalytic chamber with the active sites is on the inside of the barrel. Has a gated structure, the ends of the cylinder being occluded by the N-termini of the alpha-subunits. Is capped at one or both ends by the proteasome regulatory ATPase, PAN.

The protein localises to the cytoplasm. It carries out the reaction Cleavage of peptide bonds with very broad specificity.. The formation of the proteasomal ATPase PAN-20S proteasome complex, via the docking of the C-termini of PAN into the intersubunit pockets in the alpha-rings, triggers opening of the gate for substrate entry. Interconversion between the open-gate and close-gate conformations leads to a dynamic regulation of the 20S proteasome proteolysis activity. Functionally, component of the proteasome core, a large protease complex with broad specificity involved in protein degradation. This Methanocaldococcus sp. (strain FS406-22) protein is Proteasome subunit beta.